Consider the following 141-residue polypeptide: MGNKESRYLEMCSEEAWLNIPNIFKCIFIRKLFYNKWLKFQEKKLKKSLKLLSFYHPKKDFVGIRDMLQMAPGGSYFITDNITEEFLMLVVKHPEDGSAEFTKLCLKGSCIVIDGYYYDNLHIFISETPDIYKYPLIRYDR.

The protein belongs to the asfivirus MGF 100 family.

In terms of biological role, plays a role in virus cell tropism, and may be required for efficient virus replication in macrophages. This chain is Protein MGF 100-2L, found in African swine fever virus (isolate Tick/South Africa/Pretoriuskop Pr4/1996) (ASFV).